The following is a 177-amino-acid chain: MSRVGKRPVAVPSGVTATVDGQTVKMKGPKGQLQFVVHDDVEVKLESGQIKVKPRLETNRARALYGTARAQVANLVEGVTKGFEKKLEITGVGYRAAMQGKNLQLALGYSHDVIYTIPEGITITVPKPTEITVTGSDIQRVGQVAAEIRSYRPPEPYKGKGVKYVGEFIFRKEGKKK.

Belongs to the universal ribosomal protein uL6 family. Part of the 50S ribosomal subunit.

Its function is as follows. This protein binds to the 23S rRNA, and is important in its secondary structure. It is located near the subunit interface in the base of the L7/L12 stalk, and near the tRNA binding site of the peptidyltransferase center. This is Large ribosomal subunit protein uL6 from Bradyrhizobium diazoefficiens (strain JCM 10833 / BCRC 13528 / IAM 13628 / NBRC 14792 / USDA 110).